The following is a 229-amino-acid chain: DNA mismatch repair protein MutH (229 aa).

This sequence belongs to the MutH family.

Its subcellular location is the cytoplasm. In terms of biological role, sequence-specific endonuclease that cleaves unmethylated GATC sequences. It is involved in DNA mismatch repair. This is DNA mismatch repair protein MutH from Escherichia coli (strain K12 / MC4100 / BW2952).